Consider the following 31-residue polypeptide: Cytochrome b6-f complex subunit 6 (31 aa).

Residues 4-24 (ITSYFGFLLAVLTITSALFIG) form a helical membrane-spanning segment.

Belongs to the PetL family. As to quaternary structure, the 4 large subunits of the cytochrome b6-f complex are cytochrome b6, subunit IV (17 kDa polypeptide, PetD), cytochrome f and the Rieske protein, while the 4 small subunits are PetG, PetL, PetM and PetN. The complex functions as a dimer.

The protein localises to the plastid. It localises to the chloroplast thylakoid membrane. Its function is as follows. Component of the cytochrome b6-f complex, which mediates electron transfer between photosystem II (PSII) and photosystem I (PSI), cyclic electron flow around PSI, and state transitions. PetL is important for photoautotrophic growth as well as for electron transfer efficiency and stability of the cytochrome b6-f complex. The protein is Cytochrome b6-f complex subunit 6 of Cucumis sativus (Cucumber).